We begin with the raw amino-acid sequence, 338 residues long: UPF0194 membrane protein in asrC 5'region (338 aa).

An N-terminal signal peptide occupies residues M1–A23. The stretch at K148–D207 forms a coiled coil.

This sequence belongs to the UPF0194 family.

Its subcellular location is the periplasm. In Acidithiobacillus ferridurans, this protein is UPF0194 membrane protein in asrC 5'region.